The chain runs to 105 residues: Probable tetrachloroethene reductive dehalogenase membrane anchor protein (105 aa).

3 helical membrane-spanning segments follow: residues 3–23, 35–55, and 66–86; these read IYDV…QYGI, IPLQ…LAWG, and AIGM…IITY.

It belongs to the PceB family.

It localises to the cell membrane. May act as a membrane anchor for the tetrachloroethene reductive dehalogenase PceA. This chain is Probable tetrachloroethene reductive dehalogenase membrane anchor protein, found in Desulfitobacterium hafniense (Desulfitobacterium frappieri).